The following is a 469-amino-acid chain: MTSQLHKKGEAWSARFSEPMSELVKRYTSSVFFDKRLALVDIAGSLAHAGMLAAQKIISADDLAAIERGMAQIKGEIERGEFEWQLDLEDVHLNIEARLTALIGDAGKRLHTGRSRNDQVATDIRLWLRGEIDRIGGLLNDLRGALIDLAEQNADTILPGFTHLQVAQPVTFGHHLLAYVEMFSRDAERMRDCRARVNRLPLGAAALAGTSYPIDRHAVAKTLGFDGICANSLDAVSDRDFAIEFTAAAALVMTHVSRFSEELVLWMSPRVGFIDIADRFCTGSSIMPQKKNPDVPELARGKTGRVNGHLMALLTLMKGQPLAYNKDNQEDKEPLFDTVDTVADTLRIFAEMVAGITVKPDAMRAAALQGFSTATDLADYLVKRGLPFRDAHEAVAHAVKVCDARGIDLADLTLDEMKQELPNVAHLIGEDVFDYLTLEGSVASRNHPGGTAPDQVRAAAKAARAALGQ.

The protein belongs to the lyase 1 family. Argininosuccinate lyase subfamily.

Its subcellular location is the cytoplasm. It carries out the reaction 2-(N(omega)-L-arginino)succinate = fumarate + L-arginine. It participates in amino-acid biosynthesis; L-arginine biosynthesis; L-arginine from L-ornithine and carbamoyl phosphate: step 3/3. The sequence is that of Argininosuccinate lyase from Burkholderia mallei (strain NCTC 10247).